A 238-amino-acid chain; its full sequence is Phosphoribosylaminoimidazole-succinocarboxamide synthase (238 aa).

Belongs to the SAICAR synthetase family.

It carries out the reaction 5-amino-1-(5-phospho-D-ribosyl)imidazole-4-carboxylate + L-aspartate + ATP = (2S)-2-[5-amino-1-(5-phospho-beta-D-ribosyl)imidazole-4-carboxamido]succinate + ADP + phosphate + 2 H(+). The protein operates within purine metabolism; IMP biosynthesis via de novo pathway; 5-amino-1-(5-phospho-D-ribosyl)imidazole-4-carboxamide from 5-amino-1-(5-phospho-D-ribosyl)imidazole-4-carboxylate: step 1/2. This Nitrosococcus oceani (strain ATCC 19707 / BCRC 17464 / JCM 30415 / NCIMB 11848 / C-107) protein is Phosphoribosylaminoimidazole-succinocarboxamide synthase.